We begin with the raw amino-acid sequence, 207 residues long: LexA repressor (207 aa).

Positions 29–49 (VREICSAVDLSSTSTVHGHLA) form a DNA-binding region, H-T-H motif. Active-site for autocatalytic cleavage activity residues include Ser-128 and Lys-166.

Belongs to the peptidase S24 family. In terms of assembly, homodimer.

The catalysed reaction is Hydrolysis of Ala-|-Gly bond in repressor LexA.. Its function is as follows. Represses a number of genes involved in the response to DNA damage (SOS response), including recA and lexA. In the presence of single-stranded DNA, RecA interacts with LexA causing an autocatalytic cleavage which disrupts the DNA-binding part of LexA, leading to derepression of the SOS regulon and eventually DNA repair. The polypeptide is LexA repressor (Lactobacillus gasseri (strain ATCC 33323 / DSM 20243 / BCRC 14619 / CIP 102991 / JCM 1131 / KCTC 3163 / NCIMB 11718 / NCTC 13722 / AM63)).